A 612-amino-acid polypeptide reads, in one-letter code: 1,8-cineole synthase, chloroplastic (612 aa).

The N-terminal 52 residues, 1–52, are a transit peptide targeting the chloroplast; that stretch reads MALVCGAPLASRSCLNKSLISSTHELKPLRRTILPTLRWKSATPSINMCLTT. Positions 363, 367, and 515 each coordinate Mg(2+). Residues 363-367 carry the DDXXD motif motif; it reads DDIYD.

The protein belongs to the terpene synthase family. Tpsd subfamily. Mg(2+) is required as a cofactor. It depends on Mn(2+) as a cofactor.

Its subcellular location is the plastid. The protein localises to the chloroplast. The enzyme catalyses (2E)-geranyl diphosphate + H2O = 1,8-cineole + diphosphate. Its pathway is terpene metabolism; oleoresin biosynthesis. Functionally, terpene synthase (TPS) involved in the biosynthesis of monoterpene natural products included in conifer oleoresin secretions and volatile emissions; these compounds contribute to biotic and abiotic stress defense against herbivores and pathogens. Catalyzes the conversion of (2E)-geranyl diphosphate (GPP) to 1,8-cineole. This chain is 1,8-cineole synthase, chloroplastic, found in Picea glauca (White spruce).